The following is a 139-amino-acid chain: Large ribosomal subunit protein eL34 (139 aa).

Residues Val-113 to Lys-139 form a disordered region.

It belongs to the eukaryotic ribosomal protein eL34 family.

This is Large ribosomal subunit protein eL34 (RpL34) from Ochlerotatus triseriatus (Eastern treehole mosquito).